Here is a 178-residue protein sequence, read N- to C-terminus: Interleukin-10 (178 aa).

A signal peptide spans 1–18; it reads MHSSALLCCLVLLTGVRA. Intrachain disulfides connect Cys-30/Cys-126 and Cys-80/Cys-132. Asn-134 carries an N-linked (GlcNAc...) asparagine glycan.

This sequence belongs to the IL-10 family. As to quaternary structure, homodimer. Interacts with IL10RA and IL10RB.

It localises to the secreted. Major immune regulatory cytokine that acts on many cells of the immune system where it has profound anti-inflammatory functions, limiting excessive tissue disruption caused by inflammation. Mechanistically, IL10 binds to its heterotetrameric receptor comprising IL10RA and IL10RB leading to JAK1 and STAT2-mediated phosphorylation of STAT3. In turn, STAT3 translocates to the nucleus where it drives expression of anti-inflammatory mediators. Targets antigen-presenting cells (APCs) such as macrophages and monocytes and inhibits their release of pro-inflammatory cytokines including granulocyte-macrophage colony-stimulating factor /GM-CSF, granulocyte colony-stimulating factor/G-CSF, IL-1 alpha, IL-1 beta, IL-6, IL-8 and TNF-alpha. Also interferes with antigen presentation by reducing the expression of MHC-class II and co-stimulatory molecules, thereby inhibiting their ability to induce T cell activation. In addition, controls the inflammatory response of macrophages by reprogramming essential metabolic pathways including mTOR signaling. In Macaca mulatta (Rhesus macaque), this protein is Interleukin-10 (IL10).